The primary structure comprises 390 residues: Exodeoxyribonuclease 7 large subunit (390 aa).

This sequence belongs to the XseA family. Heterooligomer composed of large and small subunits.

It localises to the cytoplasm. The catalysed reaction is Exonucleolytic cleavage in either 5'- to 3'- or 3'- to 5'-direction to yield nucleoside 5'-phosphates.. In terms of biological role, bidirectionally degrades single-stranded DNA into large acid-insoluble oligonucleotides, which are then degraded further into small acid-soluble oligonucleotides. This chain is Exodeoxyribonuclease 7 large subunit, found in Synechococcus sp. (strain CC9311).